A 68-amino-acid chain; its full sequence is Putative membrane protein insertion efficiency factor (68 aa).

Belongs to the UPF0161 family.

Its subcellular location is the cell inner membrane. Could be involved in insertion of integral membrane proteins into the membrane. The sequence is that of Putative membrane protein insertion efficiency factor from Persephonella marina (strain DSM 14350 / EX-H1).